The following is a 279-amino-acid chain: Fatty acid metabolism regulator protein (279 aa).

The HTH gntR-type domain occupies 6–74 (KSPAGFAEKY…HGKPTKVNQF (69 aa)). The H-T-H motif DNA-binding region spans 34–53 (ERELSELIGVTRTTLREVLQ).

In terms of assembly, homodimer.

It localises to the cytoplasm. In terms of biological role, multifunctional regulator of fatty acid metabolism. The polypeptide is Fatty acid metabolism regulator protein (Vibrio parahaemolyticus serotype O3:K6 (strain RIMD 2210633)).